A 142-amino-acid polypeptide reads, in one-letter code: Peptide methionine sulfoxide reductase MsrB (142 aa).

The 124-residue stretch at 2–125 folds into the MsrB domain; that stretch reads IKKDKNELNE…NSAAIQFIPY (124 aa). The active-site Nucleophile is the C114.

Belongs to the MsrB Met sulfoxide reductase family.

It catalyses the reaction L-methionyl-[protein] + [thioredoxin]-disulfide + H2O = L-methionyl-(R)-S-oxide-[protein] + [thioredoxin]-dithiol. The chain is Peptide methionine sulfoxide reductase MsrB from Staphylococcus haemolyticus (strain JCSC1435).